We begin with the raw amino-acid sequence, 866 residues long: MPAVSLPPKENALFKRILRCYEHKQYRNGLKFCKQILSNPKFAEHGETLAMKGLTLNCLGKKEEAYELVRRGLRNDLKSHVCWHVYGLLQRSDKKYDEAIKCYRNALKWDKDNLQILRDLSLLQIQMRDLEGYRETRYQLLQLRPAQRASWIGYAIAYHLLEDYEMAAKILEEFRKTQQTSPDKVDYEYSELLLYQNQVLREAGLYREALEHLCTYEKQICDKLAVEETKGELLLQLCRLEDAADVYRGLQERNPENWAYYKGLEKALKPANMLERLKIYEEAWTKYPRGLVPRRLPLNFLSGEKFKECLDKFLRMNFSKGCPPVFNTLRSLYKDKEKVAIIEELVVGYETSLKSCRLFNPNDDGKEEPPTTLLWVQYYLAQHYDKIGQPSIALEYINTAIESTPTLIELFLVKAKIYKHAGNIKEAARWMDEAQALDTADRFINSKCAKYMLKANLIKEAEEMCSKFTREGTSAVENLNEMQCMWFQTECAQAYKAMNKFGEALKKCYEIERHFIEITDDQFDFHTYCMRKITLRSYVDLLKLEDVLRQHPFYFKAARIAIEIYLKLHDNPLTDENKEHEADTANMSDKELKKLRNKQRRAQKKAQIEEEKKNAEKEKQQRNQKKKKDDDDEEIGGPKEELIPEKLAKVETPLEEAIKFLTPLKNLVKNKIETHLFAFEIYFRKEKFLLMLQSVKRAFAIDSSHPWLHECMIRLFNTAVCESKDLSDTVRTVLKQEMHRLFGATNPKNFNETFLKRNSDSLPHRLSAAKMVYYLDPSSQKRAIELATTLDESLTNRNLQTCMEVLETLYDGSLGDCKEAAEIYRANCHKLFPYALAFMPPGYEEDMKITVNGDSSAEAEELANEI.

4 TPR repeats span residues 46–79 (GETL…DLKS), 80–113 (HVCW…DKDN), 148–184 (RASW…SPDK), and 224–257 (LAVE…NPEN). Lys-262 is modified (N6-acetyllysine). Phosphoserine is present on Ser-302. 3 TPR repeats span residues 374–407 (LWVQ…TPTL), 409–441 (ELFL…DTAD), and 485–522 (MWFQ…TDDQ). An interaction with HYPK region spans residues 500–866 (KFGEALKKCY…AEAEELANEI (367 aa)). Phosphoserine is present on residues Ser-537 and Ser-588. The segment covering 579 to 594 (EHEADTANMSDKELKK) has biased composition (basic and acidic residues). A disordered region spans residues 579–642 (EHEADTANMS…EEIGGPKEEL (64 aa)). Residues 595-604 (LRNKQRRAQK) are compositionally biased toward basic residues. Over residues 606–621 (AQIEEEKKNAEKEKQQ) the composition is skewed to basic and acidic residues. The stretch at 672–705 (IETHLFAFEIYFRKEKFLLMLQSVKRAFAIDSSH) is one TPR 8 repeat. N6-acetyllysine is present on residues Lys-735 and Lys-756. 2 positions are modified to phosphoserine: Ser-855 and Ser-856.

In terms of assembly, component of the N-terminal acetyltransferase A (NatA) complex composed of NAA10 or probably NAA11 and NAA15. Interacts with XRCC6, NAA50 and XRCC5. Associates with HYPK when in a complex with NAA10. Interaction with HYPK reduces the capacity to interact with NAA50. In terms of processing, cleaved by caspases during apoptosis.

The protein resides in the cytoplasm. It localises to the nucleus. Functionally, auxillary subunit of the N-terminal acetyltransferase A (NatA) complex which displays alpha (N-terminal) acetyltransferase activity. The NAT activity may be important for vascular, hematopoietic and neuronal growth and development. Required to control retinal neovascularization in adult ocular endothelial cells. In complex with XRCC6 and XRCC5 (Ku80), up-regulates transcription from the osteocalcin promoter. The polypeptide is N-alpha-acetyltransferase 15, NatA auxiliary subunit (NAA15) (Pongo abelii (Sumatran orangutan)).